We begin with the raw amino-acid sequence, 115 residues long: Large ribosomal subunit protein uL24 (115 aa).

The protein belongs to the universal ribosomal protein uL24 family. In terms of assembly, part of the 50S ribosomal subunit.

Functionally, one of two assembly initiator proteins, it binds directly to the 5'-end of the 23S rRNA, where it nucleates assembly of the 50S subunit. In terms of biological role, one of the proteins that surrounds the polypeptide exit tunnel on the outside of the subunit. This is Large ribosomal subunit protein uL24 from Acaryochloris marina (strain MBIC 11017).